The primary structure comprises 103 residues: UPF0145 protein pXO2-45/BXB0052/GBAA_pXO2_0052 (103 aa).

This sequence belongs to the UPF0145 family.

The chain is UPF0145 protein pXO2-45/BXB0052/GBAA_pXO2_0052 from Bacillus anthracis.